The primary structure comprises 167 residues: C-X-C motif chemokine 15 (167 aa).

A signal peptide spans 1–25 (MAAQGWSMLLLAVLNLGIFVRPCDT). Intrachain disulfides connect Cys30-Cys57 and Cys32-Cys73. Ser157 is modified (phosphoserine).

This sequence belongs to the intercrine alpha (chemokine CxC) family. As to expression, expression restricted to the lung, produced by bronchoepithelial cells and is released into the airways. Expressed at low levels in fetal lung.

It is found in the secreted. Chemotactic for neutrophils. Involved in lung-specific neutrophil trafficking during normal and inflammatory conditions. This is C-X-C motif chemokine 15 (Cxcl15) from Mus musculus (Mouse).